Here is a 250-residue protein sequence, read N- to C-terminus: AA9 family lytic polysaccharide monooxygenase E (250 aa).

A signal peptide spans 1–21 (MAMSKIMSLTGLLASASLVAG). The Cu(2+) site is built by His22 and His107. Disulfide bonds link Cys77–Cys199 and Cys118–Cys122. N-linked (GlcNAc...) asparagine glycosylation occurs at Asn159. Residues His185 and Gln194 each coordinate O2. Tyr196 contributes to the Cu(2+) binding site.

The protein belongs to the polysaccharide monooxygenase AA9 family. Cu(2+) is required as a cofactor.

It is found in the secreted. It carries out the reaction [(1-&gt;4)-beta-D-glucosyl]n+m + reduced acceptor + O2 = 4-dehydro-beta-D-glucosyl-[(1-&gt;4)-beta-D-glucosyl]n-1 + [(1-&gt;4)-beta-D-glucosyl]m + acceptor + H2O.. In terms of biological role, lytic polysaccharide monooxygenase (LPMO) that depolymerizes crystalline and amorphous polysaccharides via the oxidation of scissile alpha- or beta-(1-4)-glycosidic bonds, yielding C1 or C4 oxidation products. Catalysis by LPMOs requires the reduction of the active-site copper from Cu(II) to Cu(I) by a reducing agent and H(2)O(2) or O(2) as a cosubstrate. In Aspergillus tamarii, this protein is AA9 family lytic polysaccharide monooxygenase E.